The primary structure comprises 255 residues: Triosephosphate isomerase (255 aa).

A substrate-binding site is contributed by 15 to 17 (NWK). The Electrophile role is filled by H100. The active-site Proton acceptor is E172. Residues G178, S218, and 239 to 240 (GG) each bind substrate.

This sequence belongs to the triosephosphate isomerase family. In terms of assembly, homodimer.

The protein localises to the cytoplasm. The catalysed reaction is D-glyceraldehyde 3-phosphate = dihydroxyacetone phosphate. The protein operates within carbohydrate biosynthesis; gluconeogenesis. Its pathway is carbohydrate degradation; glycolysis; D-glyceraldehyde 3-phosphate from glycerone phosphate: step 1/1. In terms of biological role, involved in the gluconeogenesis. Catalyzes stereospecifically the conversion of dihydroxyacetone phosphate (DHAP) to D-glyceraldehyde-3-phosphate (G3P). The sequence is that of Triosephosphate isomerase from Clostridium tetani (strain Massachusetts / E88).